The primary structure comprises 94 residues: ATP-dependent Clp protease adapter protein ClpS (94 aa).

Belongs to the ClpS family. As to quaternary structure, binds to the N-terminal domain of the chaperone ClpA.

Its function is as follows. Involved in the modulation of the specificity of the ClpAP-mediated ATP-dependent protein degradation. This is ATP-dependent Clp protease adapter protein ClpS from Thermosynechococcus vestitus (strain NIES-2133 / IAM M-273 / BP-1).